Here is a 602-residue protein sequence, read N- to C-terminus: Elongation factor 4 (602 aa).

The 182-residue stretch at 7-188 folds into the tr-type G domain; sequence ENIRNFSIIA…SIIRLVPPPK (182 aa). Residues 19–24 and 135–138 each bind GTP; these read DHGKST and NKID.

Belongs to the TRAFAC class translation factor GTPase superfamily. Classic translation factor GTPase family. LepA subfamily.

It is found in the cell inner membrane. The enzyme catalyses GTP + H2O = GDP + phosphate + H(+). Its function is as follows. Required for accurate and efficient protein synthesis under certain stress conditions. May act as a fidelity factor of the translation reaction, by catalyzing a one-codon backward translocation of tRNAs on improperly translocated ribosomes. Back-translocation proceeds from a post-translocation (POST) complex to a pre-translocation (PRE) complex, thus giving elongation factor G a second chance to translocate the tRNAs correctly. Binds to ribosomes in a GTP-dependent manner. The sequence is that of Elongation factor 4 from Chlamydia trachomatis serovar D (strain ATCC VR-885 / DSM 19411 / UW-3/Cx).